Here is a 156-residue protein sequence, read N- to C-terminus: 6,7-dimethyl-8-ribityllumazine synthase (156 aa).

5-amino-6-(D-ribitylamino)uracil contacts are provided by residues Phe-23, 57 to 59, and 81 to 83; these read AYE and AII. 86–87 is a binding site for (2S)-2-hydroxy-3-oxobutyl phosphate; sequence GT. Catalysis depends on His-89, which acts as the Proton donor. Phe-114 is a binding site for 5-amino-6-(D-ribitylamino)uracil. Arg-128 contributes to the (2S)-2-hydroxy-3-oxobutyl phosphate binding site.

This sequence belongs to the DMRL synthase family.

It carries out the reaction (2S)-2-hydroxy-3-oxobutyl phosphate + 5-amino-6-(D-ribitylamino)uracil = 6,7-dimethyl-8-(1-D-ribityl)lumazine + phosphate + 2 H2O + H(+). Its pathway is cofactor biosynthesis; riboflavin biosynthesis; riboflavin from 2-hydroxy-3-oxobutyl phosphate and 5-amino-6-(D-ribitylamino)uracil: step 1/2. In terms of biological role, catalyzes the formation of 6,7-dimethyl-8-ribityllumazine by condensation of 5-amino-6-(D-ribitylamino)uracil with 3,4-dihydroxy-2-butanone 4-phosphate. This is the penultimate step in the biosynthesis of riboflavin. The protein is 6,7-dimethyl-8-ribityllumazine synthase of Helicobacter pylori (strain HPAG1).